The chain runs to 269 residues: Hdr-like menaquinol oxidoreductase iron-sulfur subunit 1 (269 aa).

Positions 1-26 form a signal peptide, tat-type signal; that stretch reads MMSRRKFLLLTGAAAAGAILTPQISA. Residues C52, C55, C72, C76, C118, C121, C126, C130, C150, C153, C156, C160, C194, C197, C215, and C219 each coordinate [4Fe-4S] cluster. The region spanning 141-170 is the 4Fe-4S ferredoxin-type domain; the sequence is GIVEIDMHRCIGCRYCMIACPYGARCFNFI.

As to quaternary structure, consists of five subunits: an integral membrane subunit, a cytochrome b-like subunit, a cytochrome c subunit and two iron-sulfur subunits. The cofactor is [4Fe-4S] cluster. Post-translationally, predicted to be exported by the Tat system. The position of the signal peptide cleavage has been experimentally proven.

Its subcellular location is the cell membrane. Has menaquinol-oxidizing activity. HmeA, HmeB and HmeE subunits may together catalyze electron transfer from menaquinol to cytochrome c. This is Hdr-like menaquinol oxidoreductase iron-sulfur subunit 1 (hmeA) from Archaeoglobus fulgidus (strain ATCC 49558 / DSM 4304 / JCM 9628 / NBRC 100126 / VC-16).